We begin with the raw amino-acid sequence, 497 residues long: Glycerol kinase (497 aa).

Threonine 13 provides a ligand contact to ADP. ATP is bound by residues threonine 13, threonine 14, and serine 15. Threonine 13 contacts sn-glycerol 3-phosphate. Arginine 17 serves as a coordination point for ADP. Sn-glycerol 3-phosphate contacts are provided by arginine 83, glutamate 84, and tyrosine 135. Positions 83, 84, and 135 each coordinate glycerol. The residue at position 231 (histidine 231) is a Phosphohistidine; by HPr. Aspartate 245 lines the sn-glycerol 3-phosphate pocket. Glycerol is bound by residues aspartate 245 and glutamine 246. ADP-binding residues include threonine 267 and glycine 310. ATP-binding residues include threonine 267, glycine 310, glutamine 314, and glycine 411. Positions 411 and 415 each coordinate ADP.

It belongs to the FGGY kinase family. As to quaternary structure, homotetramer and homodimer (in equilibrium). In terms of processing, the phosphoenolpyruvate-dependent sugar phosphotransferase system (PTS), including enzyme I, and histidine-containing protein (HPr) are required for the phosphorylation, which leads to the activation of the enzyme.

It catalyses the reaction glycerol + ATP = sn-glycerol 3-phosphate + ADP + H(+). Its pathway is polyol metabolism; glycerol degradation via glycerol kinase pathway; sn-glycerol 3-phosphate from glycerol: step 1/1. Activated by phosphorylation and inhibited by fructose 1,6-bisphosphate (FBP). Key enzyme in the regulation of glycerol uptake and metabolism. Catalyzes the phosphorylation of glycerol to yield sn-glycerol 3-phosphate. The protein is Glycerol kinase of Halalkalibacterium halodurans (strain ATCC BAA-125 / DSM 18197 / FERM 7344 / JCM 9153 / C-125) (Bacillus halodurans).